We begin with the raw amino-acid sequence, 229 residues long: 7-cyano-7-deazaguanine synthase (229 aa).

An ATP-binding site is contributed by 15-25 (LSGGLDSTTCL). The Zn(2+) site is built by cysteine 192, cysteine 202, cysteine 205, and cysteine 208.

The protein belongs to the QueC family. Zn(2+) serves as cofactor.

The catalysed reaction is 7-carboxy-7-deazaguanine + NH4(+) + ATP = 7-cyano-7-deazaguanine + ADP + phosphate + H2O + H(+). Its pathway is purine metabolism; 7-cyano-7-deazaguanine biosynthesis. Its function is as follows. Catalyzes the ATP-dependent conversion of 7-carboxy-7-deazaguanine (CDG) to 7-cyano-7-deazaguanine (preQ(0)). The protein is 7-cyano-7-deazaguanine synthase of Acinetobacter baylyi (strain ATCC 33305 / BD413 / ADP1).